The following is a 345-amino-acid chain: Glycerol-3-phosphate dehydrogenase [NAD(P)+] (345 aa).

NADPH-binding residues include Ser23, Tyr24, His44, and Lys118. Residues Lys118, Gly147, and Thr149 each contribute to the sn-glycerol 3-phosphate site. Ala151 contributes to the NADPH binding site. 5 residues coordinate sn-glycerol 3-phosphate: Lys203, Asp256, Ser266, Arg267, and Asn268. Residue Lys203 is the Proton acceptor of the active site. An NADPH-binding site is contributed by Arg267. NADPH-binding residues include Val291 and Glu293.

It belongs to the NAD-dependent glycerol-3-phosphate dehydrogenase family.

It localises to the cytoplasm. It carries out the reaction sn-glycerol 3-phosphate + NAD(+) = dihydroxyacetone phosphate + NADH + H(+). The enzyme catalyses sn-glycerol 3-phosphate + NADP(+) = dihydroxyacetone phosphate + NADPH + H(+). The protein operates within membrane lipid metabolism; glycerophospholipid metabolism. Functionally, catalyzes the reduction of the glycolytic intermediate dihydroxyacetone phosphate (DHAP) to sn-glycerol 3-phosphate (G3P), the key precursor for phospholipid synthesis. The polypeptide is Glycerol-3-phosphate dehydrogenase [NAD(P)+] (Vibrio vulnificus (strain CMCP6)).